The chain runs to 159 residues: CASP-like protein 5C1 (159 aa).

Residues 1-6 (MDNGDR) lie on the Cytoplasmic side of the membrane. Residues 7 to 29 (SGAGAGAVGSAGSLGLRVGQAVF) traverse the membrane as a helical segment. At 30 to 48 (SSASLLFMSVGVEFFSYTA) the chain is on the extracellular side. The helical transmembrane segment at 49 to 69 (FCFLVTIMGLVIPWSCTLAMI) threads the bilayer. Residues 70–94 (DVYSVFVGCPLRVPGVMVIVVVGDC) lie on the Cytoplasmic side of the membrane. The chain crosses the membrane as a helical span at residues 95–117 (ALSIVSFAAACSSAAVIDLLLQL). Residues 118 to 134 (HGSHSSPTFCGRYQLSA) are Extracellular-facing. Residues 135-155 (MMAFLSWLLMAASATFNLWFV) form a helical membrane-spanning segment. Residues 156 to 159 (ASRW) are Cytoplasmic-facing.

This sequence belongs to the Casparian strip membrane proteins (CASP) family. As to quaternary structure, homodimer and heterodimers.

It is found in the cell membrane. This Zea mays (Maize) protein is CASP-like protein 5C1.